We begin with the raw amino-acid sequence, 427 residues long: Imidazolonepropionase (427 aa).

Fe(3+) contacts are provided by H96 and H98. Residues H96 and H98 each contribute to the Zn(2+) site. 3 residues coordinate 4-imidazolone-5-propanoate: R105, Y168, and H201. Y168 contributes to the N-formimidoyl-L-glutamate binding site. H265 is a Fe(3+) binding site. Position 265 (H265) interacts with Zn(2+). Q268 contributes to the 4-imidazolone-5-propanoate binding site. D340 is a Fe(3+) binding site. Residue D340 participates in Zn(2+) binding. N-formimidoyl-L-glutamate contacts are provided by N342 and G344. Residue T345 coordinates 4-imidazolone-5-propanoate.

It belongs to the metallo-dependent hydrolases superfamily. HutI family. Zn(2+) serves as cofactor. It depends on Fe(3+) as a cofactor.

It localises to the cytoplasm. The catalysed reaction is 4-imidazolone-5-propanoate + H2O = N-formimidoyl-L-glutamate. The protein operates within amino-acid degradation; L-histidine degradation into L-glutamate; N-formimidoyl-L-glutamate from L-histidine: step 3/3. Its function is as follows. Catalyzes the hydrolytic cleavage of the carbon-nitrogen bond in imidazolone-5-propanoate to yield N-formimidoyl-L-glutamate. It is the third step in the universal histidine degradation pathway. The protein is Imidazolonepropionase of Psychrobacter cryohalolentis (strain ATCC BAA-1226 / DSM 17306 / VKM B-2378 / K5).